The sequence spans 272 residues: Ribosomal RNA large subunit methyltransferase E (272 aa).

Positions 50, 52, 68, 84, and 109 each coordinate S-adenosyl-L-methionine. Catalysis depends on lysine 149, which acts as the Proton acceptor. The 59-residue stretch at 196–254 (PLRRGDKFVVDIEKLGSGGDGAVLIEGFVVFVKEVEVGEKVRIKIADVKPNFAFADVEE) folds into the TRAM domain.

It belongs to the class I-like SAM-binding methyltransferase superfamily. RNA methyltransferase RlmE family.

The protein localises to the cytoplasm. The catalysed reaction is uridine(2552) in 23S rRNA + S-adenosyl-L-methionine = 2'-O-methyluridine(2552) in 23S rRNA + S-adenosyl-L-homocysteine + H(+). In terms of biological role, specifically methylates the uridine in position 2552 of 23S rRNA at the 2'-O position of the ribose in the fully assembled 50S ribosomal subunit. This is Ribosomal RNA large subunit methyltransferase E from Methanosarcina acetivorans (strain ATCC 35395 / DSM 2834 / JCM 12185 / C2A).